We begin with the raw amino-acid sequence, 504 residues long: Endosomal/lysosomal proton channel TMEM175 (504 aa).

The tract at residues 1–27 (MSQPRTPEQALDTPGDCPPGRRDEDAG) is disordered. The Cytoplasmic segment spans residues 1–33 (MSQPRTPEQALDTPGDCPPGRRDEDAGEGIQCS). At Thr6 the chain carries Phosphothreonine. A helical transmembrane segment spans residues 34–56 (QRMLSFSDALLSIIATVMILPVT). The RxxxFSD motif 1 motif lies at 35-41 (RMLSFSD). At 57-77 (HTEISPEQQFDRSVQRLLATR) the chain is on the lumenal side. The short helix H1-1 stretch occupies residues 58–63 (TEISPE). The tract at residues 65-71 (QFDRSVQ) is short helix H2-1. Residues 78–100 (IAVYLMTFLIVTVAWAAHTRLFQ) form a helical membrane-spanning segment. Topologically, residues 101 to 106 (VVGKTD) are cytoplasmic. A helical membrane pass occupies residues 107-128 (DTLALLNLACMMTITFLPYTFS). The Lumenal segment spans residues 129 to 138 (LMVTFPDVPL). A helical membrane pass occupies residues 139–160 (GIFLFCVCVIAIGVVQALIVGY). At 161 to 184 (AFHFPHLLSPQIQRSAHRALYRRH) the chain is on the cytoplasmic side. A helical transmembrane segment spans residues 185-205 (VLGIVLQGPALCFAAAIFSLF). At 206 to 210 (FVPLS) the chain is on the lumenal side. Residues 211-230 (YLLMVTVILLPYVSKVTGWC) form a helical membrane-spanning segment. Residues 231–257 (RDRLLGHREPSAHPVEVFSFDLHEPLS) are Cytoplasmic-facing. Residues 258 to 282 (KERVEAFSDGVYAIVATLLILDICE) traverse the membrane as a helical segment. The RxxxFSD motif 2 motif lies at 260–266 (RVEAFSD). At 283 to 309 (DNVPDPKDVKERFSGSLVAALSATGPR) the chain is on the lumenal side. Residues 288 to 296 (PKDVKERFS) form a short helix H1-2 region. Positions 298–304 (SLVAALS) are short helix H2-2. Residues 310–332 (FLAYFGSFATVGLLWFAHHSLFL) form a helical membrane-spanning segment. Topologically, residues 333-338 (HVRKAT) are cytoplasmic. A helical transmembrane segment spans residues 339–360 (RAMGLLNTLSLAFVGGLPLAYQ). Residues 361–375 (QTSAFARQPRDELER) lie on the Lumenal side of the membrane. A helical transmembrane segment spans residues 376–396 (VRVSCTIIFLASIFQLAMWTT). The Cytoplasmic portion of the chain corresponds to 397–416 (ALLHQAETLQPSVWFGGREH). A helical transmembrane segment spans residues 417-440 (VLMFAKLALYPCASLLAFASTCLL). Over 441 to 442 (SR) the chain is Lumenal. Residues 443–469 (FSVGIFHLMQIAVPCAFLLLRLLVGLA) form a helical membrane-spanning segment. Over 470–504 (LATLRVLRGLARPEHPPPAPTGQDDPQSQLLPAPC) the chain is Cytoplasmic. The disordered stretch occupies residues 483 to 504 (EHPPPAPTGQDDPQSQLLPAPC). A compositionally biased stretch (polar residues) spans 493-504 (DDPQSQLLPAPC).

This sequence belongs to the TMEM175 family. Homodimer. Interacts with AKT (AKT1, AKT2 or AKT3); leading to formation of the lysoK(GF) complex, which activates the channel. Interacts with LAMP1; inhibiting the proton channel activity of TMEM175. Interacts with LAMP2; inhibiting the proton channel activity of TMEM175. Widely expressed.

The protein localises to the endosome membrane. The protein resides in the lysosome membrane. It carries out the reaction H(+)(in) = H(+)(out). The catalysed reaction is K(+)(in) = K(+)(out). Its activity is regulated as follows. Active at low pH (under pH 4.6): proton channel activity is activated by luminal side protons. Polyunsaturated fatty acids, such as arachidonic acid, also activate the channel activity. Proton channel activity is directly inhibited by LAMP1 or LAMP2, facilitating lysosomal acidification. Channel activity is activated following interaction with AKT (AKT1, AKT2 or AKT3): interaction promotes activation from closed to an open state. Activation by AKT is independent of AKT serine/threonine-protein kinase activity. Functionally, proton-activated proton channel that catalyzes proton efflux from endosomes and lysosomes to maintain a steady-state pH. Activated at low pH (under pH 4.6) by luminal side protons: selectively mediates lysosomal proton release from lysosomes, eliciting a proton leak that balances V-ATPase activity to maintain pH homeostasis. Regulation of lumenal pH stability is required for autophagosome-lysosome fusion. Also acts as a potassium channel at higher pH, regulating potassium conductance in endosomes and lysosomes. Constitutes the pore-forming subunit of the lysoK(GF) complex, a complex activated by extracellular growth factors. The lysoK(GF) complex is composed of TMEM175 and AKT (AKT1, AKT2 or AKT3), a major target of growth factor receptors: in the complex, TMEM175 channel is opened by conformational changes by AKT, leading to its activation. The lysoK(GF) complex is required to protect neurons against stress-induced damage. This is Endosomal/lysosomal proton channel TMEM175 from Homo sapiens (Human).